A 284-amino-acid polypeptide reads, in one-letter code: Pantothenate synthetase (284 aa).

30-37 lines the ATP pocket; the sequence is MGNLHDGH. Catalysis depends on His37, which acts as the Proton donor. Residue Gln61 participates in (R)-pantoate binding. Residue Gln61 coordinates beta-alanine. Residue 149–152 participates in ATP binding; it reads GEKD. (R)-pantoate is bound at residue Gln155. ATP contacts are provided by residues Ile178 and 186 to 189; that span reads LSSR.

Belongs to the pantothenate synthetase family. As to quaternary structure, homodimer.

Its subcellular location is the cytoplasm. It carries out the reaction (R)-pantoate + beta-alanine + ATP = (R)-pantothenate + AMP + diphosphate + H(+). It functions in the pathway cofactor biosynthesis; (R)-pantothenate biosynthesis; (R)-pantothenate from (R)-pantoate and beta-alanine: step 1/1. Functionally, catalyzes the condensation of pantoate with beta-alanine in an ATP-dependent reaction via a pantoyl-adenylate intermediate. The protein is Pantothenate synthetase of Salmonella heidelberg (strain SL476).